We begin with the raw amino-acid sequence, 610 residues long: T-cell immunomodulatory protein (610 aa).

An N-terminal signal peptide occupies residues 1–32; the sequence is MAAGRLPSARAVLAPLFLGLALLSVGPAPARA. N-linked (GlcNAc...) asparagine glycans are attached at residues N35, N123, N138, N145, N150, N175, and N241. The stretch at 98 to 135 is one FG-GAP 1; atypical repeat; the sequence is LVTSVVPGDYDGDSQMDVLLTYFPQNHTNSELGAVIFW. One copy of the FG-GAP 2; atypical repeat lies at 153–183; sequence FHDQPLIMDFNGDLIPDVFGITNESSQPQIL. The stretch at 256–291 is one FG-GAP 3; atypical repeat; sequence VVGQSAFADFDGDGHMDHLLPGCEDKDCQKSAIYLM. N-linked (GlcNAc...) asparagine glycans are attached at residues N351, N369, and N480. Residues 565–585 traverse the membrane as a helical segment; it reads VLLTAVALIGVCIFILAIIAI.

It belongs to the TIP family. As to quaternary structure, interacts with RUVBL1, RUVBL2 and alpha-tubulin.

The protein localises to the secreted. It is found in the membrane. Modulator of T-cell function. Has a protective effect in graft versus host disease model. The polypeptide is T-cell immunomodulatory protein (Mus musculus (Mouse)).